Reading from the N-terminus, the 108-residue chain is UPF0145 protein LGAS_1099 (108 aa).

Belongs to the UPF0145 family.

The sequence is that of UPF0145 protein LGAS_1099 from Lactobacillus gasseri (strain ATCC 33323 / DSM 20243 / BCRC 14619 / CIP 102991 / JCM 1131 / KCTC 3163 / NCIMB 11718 / NCTC 13722 / AM63).